A 186-amino-acid polypeptide reads, in one-letter code: MNVSKYVAIFSFVFIQLISVGKVFANADEWMTTFRENIAQTRQQPEHYDLYIPAITWHARFAYDKEKTDRYNERPWGGGFGLSRWDEKGNWHGLYAMAFKDSWNKWEPIAGYGWESTWRPLADENFHLGLGFTAGVTARDNWNYIPLPVLLPLASVGYGPVTFQMTYIPGTYNNGNVYFAWMRFQF.

The first 25 residues, 1–25 (MNVSKYVAIFSFVFIQLISVGKVFA), serve as a signal peptide directing secretion. Catalysis depends on residues His-58, Asp-101, and Ser-102.

It belongs to the lipid A palmitoyltransferase family. As to quaternary structure, homodimer.

Its subcellular location is the cell outer membrane. It carries out the reaction lipid A (E. coli) + a 1-hexadecanoyl-2-acyl-sn-glycero-3-phosphocholine = hepta-acyl lipid A (E. coli) + a 2-acyl-sn-glycero-3-phosphocholine. The catalysed reaction is lipid IIA + a 1-hexadecanoyl-2-acyl-sn-glycero-3-phosphocholine = lipid IIB + a 2-acyl-sn-glycero-3-phosphocholine. It catalyses the reaction lipid IVA (E. coli) + a 1-hexadecanoyl-2-acyl-sn-glycero-3-phosphocholine = lipid IVB (E. coli) + a 2-acyl-sn-glycero-3-phosphocholine. Transfers a palmitate residue from the sn-1 position of a phospholipid to the N-linked hydroxymyristate on the proximal unit of lipid A or its precursors. This Escherichia coli (strain ATCC 55124 / KO11FL) protein is Lipid A palmitoyltransferase PagP.